The chain runs to 141 residues: Large ribosomal subunit protein uL14 (141 aa).

Belongs to the universal ribosomal protein uL14 family. Part of the 50S ribosomal subunit. Forms a cluster with proteins L3 and L24e, part of which may contact the 16S rRNA in 2 intersubunit bridges.

In terms of biological role, binds to 23S rRNA. Forms part of two intersubunit bridges in the 70S ribosome. This is Large ribosomal subunit protein uL14 from Pyrococcus furiosus (strain ATCC 43587 / DSM 3638 / JCM 8422 / Vc1).